A 130-amino-acid chain; its full sequence is Small ribosomal subunit protein uS11 (130 aa).

This sequence belongs to the universal ribosomal protein uS11 family. Part of the 30S ribosomal subunit. Interacts with proteins S7 and S18. Binds to IF-3.

In terms of biological role, located on the platform of the 30S subunit, it bridges several disparate RNA helices of the 16S rRNA. Forms part of the Shine-Dalgarno cleft in the 70S ribosome. The chain is Small ribosomal subunit protein uS11 from Dehalococcoides mccartyi (strain ATCC BAA-2266 / KCTC 15142 / 195) (Dehalococcoides ethenogenes (strain 195)).